A 218-amino-acid polypeptide reads, in one-letter code: Large ribosomal subunit protein uL3 (218 aa).

This sequence belongs to the universal ribosomal protein uL3 family. Part of the 50S ribosomal subunit. Forms a cluster with proteins L14 and L19.

In terms of biological role, one of the primary rRNA binding proteins, it binds directly near the 3'-end of the 23S rRNA, where it nucleates assembly of the 50S subunit. The polypeptide is Large ribosomal subunit protein uL3 (Corynebacterium aurimucosum (strain ATCC 700975 / DSM 44827 / CIP 107346 / CN-1) (Corynebacterium nigricans)).